Here is a 319-residue protein sequence, read N- to C-terminus: ATP-dependent 6-phosphofructokinase (319 aa).

Glycine 11 lines the ATP pocket. Arginine 21–arginine 25 serves as a coordination point for ADP. ATP contacts are provided by residues arginine 72–cysteine 73 and glycine 102–serine 105. Aspartate 103 provides a ligand contact to Mg(2+). Substrate is bound at residue threonine 125–aspartate 127. Residue aspartate 127 is the Proton acceptor of the active site. Arginine 154 is an ADP binding site. Substrate-binding positions include arginine 162 and methionine 169–arginine 171. ADP contacts are provided by residues glycine 185–glutamate 187, arginine 211, and lysine 213–histidine 215. Residues glutamate 222, arginine 243, and histidine 249–arginine 252 contribute to the substrate site.

Belongs to the phosphofructokinase type A (PFKA) family. ATP-dependent PFK group I subfamily. Prokaryotic clade 'B1' sub-subfamily. Homotetramer. Mg(2+) is required as a cofactor.

The protein localises to the cytoplasm. The catalysed reaction is beta-D-fructose 6-phosphate + ATP = beta-D-fructose 1,6-bisphosphate + ADP + H(+). It functions in the pathway carbohydrate degradation; glycolysis; D-glyceraldehyde 3-phosphate and glycerone phosphate from D-glucose: step 3/4. Allosterically activated by ADP and other diphosphonucleosides, and allosterically inhibited by phosphoenolpyruvate. Its function is as follows. Catalyzes the phosphorylation of D-fructose 6-phosphate to fructose 1,6-bisphosphate by ATP, the first committing step of glycolysis. The chain is ATP-dependent 6-phosphofructokinase from Anoxybacillus flavithermus (strain DSM 21510 / WK1).